Consider the following 164-residue polypeptide: Anthrone oxygenase AgnL2 (164 aa).

The next 3 membrane-spanning stretches (helical) occupy residues 11 to 31 (VVTG…AVPV), 48 to 70 (RMYH…LYAY), and 85 to 105 (VFAL…LCMV).

This sequence belongs to the anthrone oxygenase family.

Its subcellular location is the membrane. It carries out the reaction emodin anthrone + O2 = emodin + H2O + H(+). It participates in secondary metabolite biosynthesis. Its function is as follows. Anthrone oxygenase; part of the gene cluster that mediates the biosynthesis of agnestins, dihydroxy-xanthone metabolites. The pathway begins with the assembly and cyclization of atrochrysone thioester by the non-reducing polyketide synthase Agnpks1. The atrochrysone carboxyl ACP thioesterase AgnL7 then breaks the thioester bond and releases the atrochrysone carboxylic acid as the first enzyme-free intermediate. The decarboxylase AgnL1 then catalyzes the concerted decarboxylation-elimination required to convert atochrysone carboxylic acid into emodin anthrone, which is further oxidized to emodin by the anthrone oxygenase AgnL2. Emodin then undergoes reduction catalyzed by the oxidoreductase AgnL4 to yield the dihydroquinone tautomer which is the substrate for reduction by the short chain dehydrogenase AgnL6 reduction to produce hydroxyketone, followed by AgnL8 dehydration and likely spontaneous autoxidation to chrysophanol. Baeyer-Villiger oxidation by the oxidase AgnL3 leads to monodictyphenone via cleavage of the C-10/C-10a bond of chrysophanol. Alternative cleavage at the C-4a/C-10 bond of chrysophanol also leads to the formation some cephalone F. Further conversion to agnestins A and B, requires reduction to dihydro-monodictyphenone, oxidation to agnestin C probably via an epoxide, and rearrangement to either agnestin A or agnestin B directly, although agnestin A or agnestin B can also interconvert. Within the cluster, AgnR1 is the only unassigned oxidoreductase present which could be involved in this conversion. However, AgnR1 seems not to be involved in this step, and thus genes involved in the proposed oxidation/reduction may be located elsewhere on the genome. Further agnestin A derivatives are probably formed by spontaneous decarboxylations, dehydrations and methanolysis reactions. This is Anthrone oxygenase AgnL2 from Paecilomyces divaricatus (Penicillium divaricatum).